A 102-amino-acid polypeptide reads, in one-letter code: Large ribosomal subunit protein bL21 (102 aa).

Belongs to the bacterial ribosomal protein bL21 family. As to quaternary structure, part of the 50S ribosomal subunit. Contacts protein L20.

Functionally, this protein binds to 23S rRNA in the presence of protein L20. The protein is Large ribosomal subunit protein bL21 of Ehrlichia ruminantium (strain Gardel).